A 200-amino-acid polypeptide reads, in one-letter code: Cysteine-rich venom protein VAR8 (200 aa).

The first 22 residues, 1-22 (MILLKLYLTLAAILCQSRGTTS), serve as a signal peptide directing secretion. The 129-residue stretch at 41 to 169 (NKHNDLRRTV…PLKYFLVCQY (129 aa)) folds into the SCP domain. Cystine bridges form between Cys-77/Cys-156, Cys-95/Cys-170, Cys-151/Cys-167, and Cys-189/Cys-196.

The protein belongs to the CRISP family. In terms of processing, contains 8 disulfide bonds. As to expression, expressed by the venom gland.

It is found in the secreted. Blocks ryanodine receptors, and potassium channels. This Varanus acanthurus (Ridge-tailed monitor) protein is Cysteine-rich venom protein VAR8.